Consider the following 185-residue polypeptide: Ribosome-recycling factor (185 aa).

Belongs to the RRF family.

Its subcellular location is the cytoplasm. In terms of biological role, responsible for the release of ribosomes from messenger RNA at the termination of protein biosynthesis. May increase the efficiency of translation by recycling ribosomes from one round of translation to another. This is Ribosome-recycling factor from Lactococcus lactis subsp. cremoris (strain SK11).